The following is a 169-amino-acid chain: NAD(P)H-quinone oxidoreductase subunit 6, chloroplastic (169 aa).

The next 5 membrane-spanning stretches (helical) occupy residues 7-27, 29-49, 58-78, 90-110, and 139-159; these read FSSA…IFLP, IVYA…IYVL, AQVL…IMLV, SPPL…VQMI, and LLAF…AIVL.

It belongs to the complex I subunit 6 family. NDH is composed of at least 16 different subunits, 5 of which are encoded in the nucleus.

It is found in the plastid. The protein localises to the chloroplast thylakoid membrane. The catalysed reaction is a plastoquinone + NADH + (n+1) H(+)(in) = a plastoquinol + NAD(+) + n H(+)(out). The enzyme catalyses a plastoquinone + NADPH + (n+1) H(+)(in) = a plastoquinol + NADP(+) + n H(+)(out). Functionally, NDH shuttles electrons from NAD(P)H:plastoquinone, via FMN and iron-sulfur (Fe-S) centers, to quinones in the photosynthetic chain and possibly in a chloroplast respiratory chain. The immediate electron acceptor for the enzyme in this species is believed to be plastoquinone. Couples the redox reaction to proton translocation, and thus conserves the redox energy in a proton gradient. The protein is NAD(P)H-quinone oxidoreductase subunit 6, chloroplastic (ndhG) of Nephroselmis olivacea (Green alga).